The following is a 212-amino-acid chain: Proteasome subunit beta 2 (212 aa).

The propeptide at 1–15 is removed in mature form; by autocatalysis; the sequence is MLHHPGTGQLRALKG. Threonine 16 acts as the Nucleophile in catalysis.

Belongs to the peptidase T1B family. As to quaternary structure, the 20S proteasome core is composed of 14 alpha and 14 beta subunits that assemble into four stacked heptameric rings, resulting in a barrel-shaped structure. The two inner rings, each composed of seven catalytic beta subunits, are sandwiched by two outer rings, each composed of seven alpha subunits. The catalytic chamber with the active sites is on the inside of the barrel. Has a gated structure, the ends of the cylinder being occluded by the N-termini of the alpha-subunits. Is capped at one or both ends by the proteasome regulatory ATPase, PAN.

It is found in the cytoplasm. The catalysed reaction is Cleavage of peptide bonds with very broad specificity.. The formation of the proteasomal ATPase PAN-20S proteasome complex, via the docking of the C-termini of PAN into the intersubunit pockets in the alpha-rings, triggers opening of the gate for substrate entry. Interconversion between the open-gate and close-gate conformations leads to a dynamic regulation of the 20S proteasome proteolysis activity. In terms of biological role, component of the proteasome core, a large protease complex with broad specificity involved in protein degradation. The chain is Proteasome subunit beta 2 from Hyperthermus butylicus (strain DSM 5456 / JCM 9403 / PLM1-5).